Here is a 667-residue protein sequence, read N- to C-terminus: Beta-galactosidase LacA (667 aa).

A substrate-binding site is contributed by arginine 109. Residue cysteine 113 coordinates Zn(2+). Residue asparagine 147 participates in substrate binding. The active-site Proton donor is the glutamate 148. Residues cysteine 153, cysteine 155, and cysteine 158 each coordinate Zn(2+). The active-site Nucleophile is glutamate 307. Substrate is bound by residues tryptophan 315 and 355–358 (EKFH).

It belongs to the glycosyl hydrolase 42 family.

It carries out the reaction Hydrolysis of terminal non-reducing beta-D-galactose residues in beta-D-galactosides.. Its function is as follows. Hydrolyzes lactose, oNP-galactoside (oNPG), pNP-galactosidase (pNPG), pNP-mannoside, pNP-glucoside, pNP-fucoside, pNP-N-acetylglucosamide, but not pNP-arabinoside or 4-methylumbelliferyl-beta-galactopyranoside (MUG). Transgalactosylates lactose at 10 g/L, but not at 270 g/L. The chain is Beta-galactosidase LacA from Lactobacillus acidophilus.